The sequence spans 208 residues: Floral homeotic protein PISTILLATA (208 aa).

One can recognise an MADS-box domain in the interval 3-57 (RGKIEIKRIENANNRVVTFSKRRNGLVKKAKEITVLCDAKVALIIFASNGKMIDY). Positions 75–117 (SGKKLWDAKHENLSNEIDRIKKENDSLQLELRHLKGEDIQSLN) form a coiled coil. In terms of domain architecture, K-box spans 84 to 170 (HENLSNEIDR…TFQLQQQEMA (87 aa)).

As to quaternary structure, forms a heterodimer with APETALA3, capable of binding to CArG-box sequences. AP3/PI heterodimer binds AP1 or SEP3 to form a ternary complex.

The protein localises to the nucleus. Functionally, probable transcription factor involved in the genetic control of flower development. Is required for normal development of petals and stamens in the wild-type flower. Forms a heterodimer with APETALA3 that is required for autoregulation of both AP3 and PI genes. AP3/PI heterodimer interacts with APETALA1 or SEPALLATA3 to form a ternary complex that could be responsible for the regulation of the genes involved in the flower development. AP3/PI heterodimer activates the expression of NAP. AP3/PI prevents GATA22/GNL and GATA21/GNC expression. The polypeptide is Floral homeotic protein PISTILLATA (PI) (Arabidopsis thaliana (Mouse-ear cress)).